A 635-amino-acid polypeptide reads, in one-letter code: Threonine--tRNA ligase (635 aa).

A TGS domain is found at M1–T61. The catalytic stretch occupies residues D242–P533. Zn(2+) is bound by residues C333, H384, and H510.

It belongs to the class-II aminoacyl-tRNA synthetase family. In terms of assembly, homodimer. The cofactor is Zn(2+).

The protein resides in the cytoplasm. It catalyses the reaction tRNA(Thr) + L-threonine + ATP = L-threonyl-tRNA(Thr) + AMP + diphosphate + H(+). Its function is as follows. Catalyzes the attachment of threonine to tRNA(Thr) in a two-step reaction: L-threonine is first activated by ATP to form Thr-AMP and then transferred to the acceptor end of tRNA(Thr). Also edits incorrectly charged L-seryl-tRNA(Thr). The polypeptide is Threonine--tRNA ligase (Rickettsia conorii (strain ATCC VR-613 / Malish 7)).